The primary structure comprises 632 residues: Probable potassium transport system protein Kup (632 aa).

A run of 12 helical transmembrane segments spans residues 20-40 (LLVAAVGVVYGDIGTSPLYTL), 60-80 (ILSLILWSLLWVVSFKYVMFI), 111-131 (LMVICGLIGASLFYGDSMITP), 146-166 (FDGIDHWVVPISLVVLVALFL), 178-198 (LFGPIMVTWFVVLAALGVHGI), 216-236 (FFIVHPGMGVAILGAVVLALT), 257-277 (WFALVLPALVLNYFGQGAILL), 289-309 (LLAPGWALLPLVGLATMATVI), 347-367 (IYIAAVNWTLMVGVVLLVIGF), 379-399 (VAVTGTMLMTTILVSAVMLLL), 404-424 (PVLAVPILIGFLLVDGLFFAA), and 429-449 (IVQGGAFPVLAGGVLFLLMST).

The protein belongs to the HAK/KUP transporter (TC 2.A.72) family.

The protein resides in the cell inner membrane. It carries out the reaction K(+)(in) + H(+)(in) = K(+)(out) + H(+)(out). Functionally, transport of potassium into the cell. Likely operates as a K(+):H(+) symporter. In Pseudomonas putida (strain W619), this protein is Probable potassium transport system protein Kup.